Here is a 480-residue protein sequence, read N- to C-terminus: Proline--tRNA ligase (480 aa).

Belongs to the class-II aminoacyl-tRNA synthetase family. ProS type 3 subfamily. In terms of assembly, homodimer.

It localises to the cytoplasm. The catalysed reaction is tRNA(Pro) + L-proline + ATP = L-prolyl-tRNA(Pro) + AMP + diphosphate. In terms of biological role, catalyzes the attachment of proline to tRNA(Pro) in a two-step reaction: proline is first activated by ATP to form Pro-AMP and then transferred to the acceptor end of tRNA(Pro). This Roseiflexus sp. (strain RS-1) protein is Proline--tRNA ligase.